We begin with the raw amino-acid sequence, 131 residues long: MYMDPISDLLLRIKTGTKTKRNSVVVKTSKLVTNILEILKNEGYIEGFKTESIGKNKNQTVVNLKYRNNVSSITGLKQISKPGLRIYSEAQKLPKVLNGLGIAIISTSMGLMTDKNAKKNNVGGEVIAYVW.

This sequence belongs to the universal ribosomal protein uS8 family. As to quaternary structure, part of the 30S ribosomal subunit. Contacts proteins S5 and S12.

In terms of biological role, one of the primary rRNA binding proteins, it binds directly to 16S rRNA central domain where it helps coordinate assembly of the platform of the 30S subunit. This chain is Small ribosomal subunit protein uS8, found in Malacoplasma penetrans (strain HF-2) (Mycoplasma penetrans).